A 222-amino-acid chain; its full sequence is Eukaryotic translation initiation factor 3 subunit K (222 aa).

Residues 46 to 208 (YDLEANLAVL…KIKTKNITEK (163 aa)) form the PCI domain.

It belongs to the eIF-3 subunit K family. In terms of assembly, component of the eukaryotic translation initiation factor 3 (eIF-3) complex. The eIF-3 complex interacts with pix.

It is found in the cytoplasm. In terms of biological role, component of the eukaryotic translation initiation factor 3 (eIF-3) complex, which is involved in protein synthesis of a specialized repertoire of mRNAs and, together with other initiation factors, stimulates binding of mRNA and methionyl-tRNAi to the 40S ribosome. The eIF-3 complex specifically targets and initiates translation of a subset of mRNAs involved in cell proliferation. This chain is Eukaryotic translation initiation factor 3 subunit K, found in Drosophila persimilis (Fruit fly).